The sequence spans 283 residues: 4-hydroxy-tetrahydrodipicolinate synthase (283 aa).

Thr-46 contributes to the pyruvate binding site. Catalysis depends on Tyr-134, which acts as the Proton donor/acceptor. Catalysis depends on Lys-162, which acts as the Schiff-base intermediate with substrate. A pyruvate-binding site is contributed by Ile-208.

Belongs to the DapA family. As to quaternary structure, homotetramer; dimer of dimers.

It is found in the cytoplasm. It carries out the reaction L-aspartate 4-semialdehyde + pyruvate = (2S,4S)-4-hydroxy-2,3,4,5-tetrahydrodipicolinate + H2O + H(+). Its pathway is amino-acid biosynthesis; L-lysine biosynthesis via DAP pathway; (S)-tetrahydrodipicolinate from L-aspartate: step 3/4. Its function is as follows. Catalyzes the condensation of (S)-aspartate-beta-semialdehyde [(S)-ASA] and pyruvate to 4-hydroxy-tetrahydrodipicolinate (HTPA). This is 4-hydroxy-tetrahydrodipicolinate synthase from Methanothermobacter thermautotrophicus (strain ATCC 29096 / DSM 1053 / JCM 10044 / NBRC 100330 / Delta H) (Methanobacterium thermoautotrophicum).